Reading from the N-terminus, the 248-residue chain is UPF0246 protein RC0754 (248 aa).

Belongs to the UPF0246 family.

This is UPF0246 protein RC0754 from Rickettsia conorii (strain ATCC VR-613 / Malish 7).